We begin with the raw amino-acid sequence, 662 residues long: Envelope glycoprotein (662 aa).

A signal peptide spans 1–34 (MEGPTHPKPSKDKTFSWDLMILVGVLLRLDVGMA). Over 35–606 (NPSPHQIYNV…FNKSPWFTTL (572 aa)) the chain is Extracellular. N-linked (GlcNAc...) asparagine; by host glycans are attached at residues Asn-43 and Asn-58. 2 disulfides stabilise this stretch: Cys-115-Cys-132 and Cys-124-Cys-137. The interval 251-281 (VLPDQKPPSRQSQIESRVTPHHSQGNGGTPG) is disordered. Residues 258–274 (PSRQSQIESRVTPHHSQ) are compositionally biased toward polar residues. Residues Asn-286, Asn-322, and Asn-327 are each glycosylated (N-linked (GlcNAc...) asparagine; by host). Intrachain disulfides connect Cys-332–Cys-335, Cys-332–Cys-559, and Cys-551–Cys-558. The short motif at 332–335 (CWLC) is the CXXC element. Asn-351, Asn-354, and Asn-430 each carry an N-linked (GlcNAc...) asparagine; by host glycan. A fusion peptide region spans residues 468–488 (ISLTVALMLGGLTVGGIAAGV). 2 coiled-coil regions span residues 496-545 (LETA…ILFL) and 555-591 (KEEC…SQQG). Residues 534-550 (LQNRRGLDILFLQEGGL) are immunosuppression. Positions 551 to 559 (CAALKEECC) match the CX6CC motif. Residues 607 to 627 (ISSIMGPLLILLLILLFGPCI) form a helical membrane-spanning segment. Cys-626 is lipidated: S-palmitoyl cysteine; by host. Topologically, residues 628 to 662 (LNRLVQFVKDRISVVQALILTQQYQQIKQYDPDQP) are cytoplasmic.

As to quaternary structure, the mature envelope protein (Env) consists of a trimer of SU-TM heterodimers attached by a labile interchain disulfide bond. In terms of processing, specific enzymatic cleavages in vivo yield mature proteins. Envelope glycoproteins are synthesized as an inactive precursor that is N-glycosylated and processed likely by host cell furin or by a furin-like protease in the Golgi to yield the mature SU and TM proteins. The cleavage site between SU and TM requires the minimal sequence [KR]-X-[KR]-R. The R-peptide is released from the C-terminus of the cytoplasmic tail of the TM protein upon particle formation as a result of proteolytic cleavage by the viral protease. Cleavage of this peptide is required for TM to become fusogenic. The CXXC motif is highly conserved across a broad range of retroviral envelope proteins. It is thought to participate in the formation of a labile disulfide bond possibly with the CX6CC motif present in the transmembrane protein. Isomerization of the intersubunit disulfide bond to an SU intrachain disulfide bond is thought to occur upon receptor recognition in order to allow membrane fusion. Post-translationally, the transmembrane protein is palmitoylated. In terms of processing, the R-peptide is palmitoylated.

It localises to the virion membrane. Its subcellular location is the host cell membrane. Its function is as follows. The surface protein (SU) attaches the virus to the host cell by binding to its receptor. This interaction triggers the refolding of the transmembrane protein (TM) and is thought to activate its fusogenic potential by unmasking its fusion peptide. Fusion occurs at the host cell plasma membrane. In terms of biological role, the transmembrane protein (TM) acts as a class I viral fusion protein. Under the current model, the protein has at least 3 conformational states: pre-fusion native state, pre-hairpin intermediate state, and post-fusion hairpin state. During viral and target cell membrane fusion, the coiled coil regions (heptad repeats) assume a trimer-of-hairpins structure, positioning the fusion peptide in close proximity to the C-terminal region of the ectodomain. The formation of this structure appears to drive apposition and subsequent fusion of viral and target cell membranes. Membranes fusion leads to delivery of the nucleocapsid into the cytoplasm. This chain is Envelope glycoprotein (env), found in Felis catus (Cat).